The following is a 195-amino-acid chain: Apoptosis-associated speck-like protein containing a CARD (195 aa).

The region spanning 1 to 91 is the Pyrin domain; that stretch reads MGCTRDAILD…AEQLQETMSK (91 aa). Glycyl lysine isopeptide (Lys-Gly) (interchain with G-Cter in ubiquitin) cross-links involve residues Lys-55 and Lys-174. Residues 107-195 enclose the CARD domain; it reads TAKPGLHFVD…PYLVDDLEQS (89 aa). A Phosphoserine modification is found at Ser-195.

Self-associates; enforced oligomerization induces apoptosis, NF-kappa-B regulation and interleukin-1 beta secretion. Homooligomers can form disk-like particles of approximately 12 nm diameter and approximately 1 nm height. Component of several inflammasomes containing one pattern recognition receptor/sensor, such as NLRP1, NLRP2, NLRP3, NLRP6, NLRC4, AIM2, MEFV or NOD2, and probably NLRC4 or NLRP12. Major component of the ASC pyroptosome, a 1-2 um supramolecular assembly (one per macrophage cell) which consists of oligomerized PYCARD dimers and CASP1. Interacts with CASP1 (precursor form); the interaction induces activation of CASP1 leading to the processing of interleukin-1 beta; PYCARD competes with RIPK2 for binding to CASP1. Interacts with NLRP3; the interaction requires the homooligomerization of NLRP3. Interacts with NLRP2, NLRC4, MEFV, CARD16, AIM2, NOD2, RIGI, RIPK2, PYDC1, PYDC2, NLRP10, CASP8, CHUK, IKBKB and BAX. Component of the AIM2 PANoptosome complex, a multiprotein complex that drives inflammatory cell death (PANoptosis). In terms of processing, phosphorylated. Post-translationally, 'Lys-63'-linked polyubiquitination by TRAF3 is critical for speck formation and inflammasome activation. 'Lys-63'-linked deubiquitinated by USP50; a crucial step for NLRP3-mediated inflammasome activation. 'Lys-63'-linked polyubiquitination by PELI1 is also critical for speck formation and inflammasome activation. Deubiquitinated by USP3 that cleaves 'Lys-48'-linked ubiquitin chains and strengthens its stability by blocking proteasomal degradation.

It is found in the cytoplasm. Its subcellular location is the inflammasome. The protein resides in the endoplasmic reticulum. The protein localises to the mitochondrion. It localises to the nucleus. Functions as a key mediator in apoptosis and inflammation. Promotes caspase-mediated apoptosis involving predominantly caspase-8 and also caspase-9 in a probable cell type-specific manner. Involved in activation of the mitochondrial apoptotic pathway, promotes caspase-8-dependent proteolytic maturation of BID independently of FADD in certain cell types and also mediates mitochondrial translocation of BAX and activates BAX-dependent apoptosis coupled to activation of caspase-9, -2 and -3. Involved in innate immune response by acting as an integral adapter in the assembly of various inflammasomes (NLRP2, NLRP3, NLRP6 and AIM2) which recruit and activate caspase-1 leading to processing and secretion of pro-inflammatory cytokines. Caspase-1-dependent inflammation leads to macrophage pyroptosis, a form of cell death. The function as activating adapter in different types of inflammasomes is mediated by the pyrin and CARD domains and their homotypic interactions. Clustered PYCARD nucleates the formation of caspase-1 filaments through the interaction of their respective CARD domains, acting as a platform for of caspase-1 polymerization. In the NLRC4 inflammasomes seems not be required but facilitates the processing of procaspase-1. In cooperation with NOD2 involved in an inflammasome activated by bacterial muramyl dipeptide leading to caspase-1 activation. May be involved in RIGI-triggered pro-inflammatory responses and inflammasome activation. In collaboration with AIM2 which detects cytosolic double-stranded DNA may also be involved in a caspase-1-independent cell death that involves caspase-8. In adaptive immunity may be involved in maturation of dendritic cells to stimulate T-cell immunity and in cytoskeletal rearrangements coupled to chemotaxis and antigen uptake may be involved in post-transcriptional regulation of the guanine nucleotide exchange factor DOCK2; the latter function is proposed to involve the nuclear form. Also involved in transcriptional activation of cytokines and chemokines independent of the inflammasome; this function may involve AP-1, NF-kappa-B, MAPK and caspase-8 signaling pathways. For regulation of NF-kappa-B activating and inhibiting functions have been reported. Modulates NF-kappa-B induction at the level of the IKK complex by inhibiting kinase activity of CHUK and IKBK. Proposed to compete with RIPK2 for association with CASP1 thereby down-regulating CASP1-mediated RIPK2-dependent NF-kappa-B activation and activating interleukin-1 beta processing. Modulates host resistance to DNA virus infection, probably by inducing the cleavage of and inactivating CGAS in presence of cytoplasmic double-stranded DNA. The polypeptide is Apoptosis-associated speck-like protein containing a CARD (PYCARD) (Bos taurus (Bovine)).